The sequence spans 188 residues: Peptidyl-tRNA hydrolase (188 aa).

Position 15 (Phe15) interacts with tRNA. The Proton acceptor role is filled by His20. TRNA is bound by residues Tyr64, Asn66, and Asn112.

It belongs to the PTH family. As to quaternary structure, monomer.

It is found in the cytoplasm. The catalysed reaction is an N-acyl-L-alpha-aminoacyl-tRNA + H2O = an N-acyl-L-amino acid + a tRNA + H(+). Functionally, hydrolyzes ribosome-free peptidyl-tRNAs (with 1 or more amino acids incorporated), which drop off the ribosome during protein synthesis, or as a result of ribosome stalling. Its function is as follows. Catalyzes the release of premature peptidyl moieties from peptidyl-tRNA molecules trapped in stalled 50S ribosomal subunits, and thus maintains levels of free tRNAs and 50S ribosomes. This chain is Peptidyl-tRNA hydrolase, found in Borrelia recurrentis (strain A1).